The following is a 170-amino-acid chain: Shikimate kinase (170 aa).

Position 11-16 (11-16 (LSGKST)) interacts with ATP. Serine 15 serves as a coordination point for Mg(2+). The substrate site is built by aspartate 33, arginine 57, and glycine 79. Arginine 119 contributes to the ATP binding site. Arginine 137 is a substrate binding site.

This sequence belongs to the shikimate kinase family. In terms of assembly, monomer. It depends on Mg(2+) as a cofactor.

The protein localises to the cytoplasm. It catalyses the reaction shikimate + ATP = 3-phosphoshikimate + ADP + H(+). It functions in the pathway metabolic intermediate biosynthesis; chorismate biosynthesis; chorismate from D-erythrose 4-phosphate and phosphoenolpyruvate: step 5/7. Functionally, catalyzes the specific phosphorylation of the 3-hydroxyl group of shikimic acid using ATP as a cosubstrate. This is Shikimate kinase from Clostridium botulinum (strain Okra / Type B1).